A 242-amino-acid polypeptide reads, in one-letter code: Type III pantothenate kinase (242 aa).

Residue 5–12 participates in ATP binding; it reads DLGNTRLK. Substrate-binding positions include Tyr-94 and 100-103; that span reads GCDR. Catalysis depends on Asp-102, which acts as the Proton acceptor. Residue Thr-124 participates in ATP binding. Residue Thr-175 participates in substrate binding.

It belongs to the type III pantothenate kinase family. In terms of assembly, homodimer. It depends on NH4(+) as a cofactor. Requires K(+) as cofactor.

It localises to the cytoplasm. It carries out the reaction (R)-pantothenate + ATP = (R)-4'-phosphopantothenate + ADP + H(+). It functions in the pathway cofactor biosynthesis; coenzyme A biosynthesis; CoA from (R)-pantothenate: step 1/5. Catalyzes the phosphorylation of pantothenate (Pan), the first step in CoA biosynthesis. The sequence is that of Type III pantothenate kinase from Psychrobacter cryohalolentis (strain ATCC BAA-1226 / DSM 17306 / VKM B-2378 / K5).